A 469-amino-acid polypeptide reads, in one-letter code: MATCSRQFTSSSSMKGSCGIGGGSSRMSSILAGGSCRAPSTCGGMSVTSSRFSSGGVCGIGGGYGGSFSSSSFGGGLGSGFGGRFDGFGGGFGAGLGGGLGGGIGDGLLVGSEKVTMQNLNDRLATYLDKVRALEEANRDLEVKIRDWYQRQRPTEIKDYSPYFKTIEDLKSKIIIATQENAQFTLQIDNARLAADDFRTKYENELFLRQSVEGDINGLRKVLDELTLSRADLEMQIENLREELAFLKKNHEEEMLALRGQTGGDVNVEMDAAPGVDLSRILNEMRDQYEQMAEKNRRDVEAWFLRKTEELNKEVASNSDLIQSNRSEVAELRRVFQGLEIELQSQLSMKASLENSLEETKGRYCMQLSQIQGLISSVEEQLAQLRCEMEQQSQEYNILLDVKTRLEQEIATYRRLLDGENIHSSSQHSSGQSYSSREVFSSSSRQPRSILKEQGSTSFSQSQSQSSRD.

Positions 1 to 20 are disordered; that stretch reads MATCSRQFTSSSSMKGSCGI. The head stretch occupies residues 1 to 112; sequence MATCSRQFTS…GIGDGLLVGS (112 aa). Residues 113–148 form a coil 1A region; the sequence is EKVTMQNLNDRLATYLDKVRALEEANRDLEVKIRDW. Residues 113–424 form the IF rod domain; sequence EKVTMQNLND…RLLDGENIHS (312 aa). A linker 1 region spans residues 149–166; that stretch reads YQRQRPTEIKDYSPYFKT. The coil 1B stretch occupies residues 167-258; sequence IEDLKSKIII…KNHEEEMLAL (92 aa). The tract at residues 259–281 is linker 12; it reads RGQTGGDVNVEMDAAPGVDLSRI. The tract at residues 282–420 is coil 2; it reads LNEMRDQYEQ…ATYRRLLDGE (139 aa). The interval 421–469 is tail; the sequence is NIHSSSQHSSGQSYSSREVFSSSSRQPRSILKEQGSTSFSQSQSQSSRD. A disordered region spans residues 422–469; sequence IHSSSQHSSGQSYSSREVFSSSSRQPRSILKEQGSTSFSQSQSQSSRD. 2 stretches are compositionally biased toward low complexity: residues 423–444 and 454–469; these read HSSSQHSSGQSYSSREVFSSSS and QGSTSFSQSQSQSSRD.

This sequence belongs to the intermediate filament family. Heterodimer of a type I and a type II keratin. KRT16 associates with KRT6 isomers (KRT6A or KRT6B). Interacts with TCHP. Interacts with TRADD. Expressed in the epithelia of the tongue, upper and lower palate, footpad, proximal nail fold and nail bed, penile spine, sweat gland ducts, and back epidermis (at protein level). Expressed in upper suprabasal layers of the corneal epithelium (at protein level). Expressed in internal stratified epithelia in the esophagus and vagina (at protein level). Expressed in transitional stratified squamous epithelia in the forestomach, anal canal, and nasal cavity (at protein level). Expressed in transitional epithelia of the ureter, bladder and urethra (at protein level). In mature hair follicles, expressed in the companion layer of the outer root sheath during anagen and in the club hair sheath during catagen and telogen (at protein level).

Functionally, epidermis-specific type I keratin that plays a key role in skin. Acts as a regulator of innate immunity in response to skin barrier breach: required for some inflammatory checkpoint for the skin barrier maintenance. This Mus musculus (Mouse) protein is Keratin, type I cytoskeletal 16 (Krt16).